We begin with the raw amino-acid sequence, 371 residues long: Ferrochelatase (371 aa).

His-218 and Glu-299 together coordinate Fe cation.

It belongs to the ferrochelatase family.

It localises to the cytoplasm. The enzyme catalyses heme b + 2 H(+) = protoporphyrin IX + Fe(2+). It functions in the pathway porphyrin-containing compound metabolism; protoheme biosynthesis; protoheme from protoporphyrin-IX: step 1/1. Functionally, catalyzes the ferrous insertion into protoporphyrin IX. The polypeptide is Ferrochelatase (Ralstonia nicotianae (strain ATCC BAA-1114 / GMI1000) (Ralstonia solanacearum)).